Here is a 178-residue protein sequence, read N- to C-terminus: Large ribosomal subunit protein uL6c (178 aa).

The protein belongs to the universal ribosomal protein uL6 family. As to quaternary structure, part of the 50S ribosomal subunit.

The protein resides in the plastid. It is found in the chloroplast. Its function is as follows. Binds 23S rRNA. This chain is Large ribosomal subunit protein uL6c (rpl6), found in Phaeodactylum tricornutum (strain CCAP 1055/1).